The chain runs to 320 residues: Methionyl-tRNA formyltransferase (320 aa).

114-117 (SLLP) is a (6S)-5,6,7,8-tetrahydrofolate binding site.

It belongs to the Fmt family.

It carries out the reaction L-methionyl-tRNA(fMet) + (6R)-10-formyltetrahydrofolate = N-formyl-L-methionyl-tRNA(fMet) + (6S)-5,6,7,8-tetrahydrofolate + H(+). Attaches a formyl group to the free amino group of methionyl-tRNA(fMet). The formyl group appears to play a dual role in the initiator identity of N-formylmethionyl-tRNA by promoting its recognition by IF2 and preventing the misappropriation of this tRNA by the elongation apparatus. This is Methionyl-tRNA formyltransferase from Acinetobacter baumannii (strain SDF).